We begin with the raw amino-acid sequence, 585 residues long: ADP-ribosylation factor-binding protein GGA2 (585 aa).

One can recognise a VHS domain in the interval Ala-33–Pro-169. Glycyl lysine isopeptide (Lys-Gly) (interchain with G-Cter in ubiquitin) cross-links involve residues Lys-180 and Lys-287. A GAT domain is found at Glu-196–Asn-321. The disordered stretch occupies residues Leu-358 to Ala-378. A compositionally biased stretch (low complexity) spans Gly-365 to Thr-374. A GAE domain is found at Thr-466–Thr-581.

As to quaternary structure, binds to ARF1 and ARF2.

The protein resides in the golgi apparatus. It localises to the trans-Golgi network. In terms of biological role, may play a role in the regulation of membrane traffic through the trans-Golgi network. In Saccharomyces cerevisiae (strain ATCC 204508 / S288c) (Baker's yeast), this protein is ADP-ribosylation factor-binding protein GGA2 (GGA2).